The primary structure comprises 259 residues: Translation initiation factor IF-2, chloroplastic (259 aa).

Residues 171-259 enclose the tr-type G domain; the sequence is LRAPIVAVLG…LLIIAADEGI (89 aa). 180–187 provides a ligand contact to GTP; the sequence is GHVNHGKT.

The protein belongs to the TRAFAC class translation factor GTPase superfamily. Classic translation factor GTPase family. IF-2 subfamily.

It is found in the plastid. Its subcellular location is the chloroplast. Functionally, one of the essential components for the initiation of protein synthesis. Protects formylmethionyl-tRNA from spontaneous hydrolysis and promotes its binding to the 30S ribosomal subunits. Also involved in the hydrolysis of GTP during the formation of the 70S ribosomal complex. This chain is Translation initiation factor IF-2, chloroplastic (infB), found in Galdieria sulphuraria (Red alga).